The primary structure comprises 346 residues: G-protein coupled receptor homolog U12 (346 aa).

At 1–31 (MICYSFAKNVTFAFLIILQNFFSQHDEEYKY) the chain is on the extracellular side. Residues 32 to 56 (NYTCITPTVRKAQRLESVINGIMLT) traverse the membrane as a helical segment. The Cytoplasmic portion of the chain corresponds to 57 to 83 (LILPVSTVVICTLLIYYKWTKQTITSP). The chain crosses the membrane as a helical span at residues 84–108 (YLITLFISDSLHSLTVLLLTLNREA). The Extracellular segment spans residues 109–115 (LTNLNQA). The helical transmembrane segment at 116-142 (LCQCVLFVYSASCTYSLCMLAVISTIR) threads the bilayer. At 143 to 159 (YRTLQRRTLNDKNNNHI) the chain is on the cytoplasmic side. A helical transmembrane segment spans residues 160–181 (KRNVGILFLSSAMCAIPAVLYV). At 182–208 (QVEKKKGNYGKCNIHISTQKAYDLFIG) the chain is on the extracellular side. The chain crosses the membrane as a helical span at residues 209 to 229 (IKIVYCFLWGIFPTVIFSYFY). At 230-245 (VIFGKTLRALTQSKHN) the chain is on the cytoplasmic side. Residues 246 to 272 (KTLSFISLLILSFLCIQIPNLLVMSVE) form a helical membrane-spanning segment. Topologically, residues 273–286 (IFFLYIANTSCLGT) are extracellular. The chain crosses the membrane as a helical span at residues 287 to 310 (IQREIVQIISRLMPEIHCLSNPLV). Topologically, residues 311–346 (YAFTRTDFRLRFYDFIKCNLCNSSLKRKRNPLTIKN) are cytoplasmic.

The protein belongs to the G-protein coupled receptor 1 family.

Its subcellular location is the host cell membrane. This is G-protein coupled receptor homolog U12 (U12) from Homo sapiens (Human).